A 121-amino-acid chain; its full sequence is Protein PilH (121 aa).

The region spanning 3-119 (RILIVDDSPT…TLLKTINAVL (117 aa)) is the Response regulatory domain. Residue D52 is modified to 4-aspartylphosphate.

Functionally, may be a part of a signal-transduction system that regulates twitching motility by controlling pilus function (extension and retraction). This is Protein PilH (pilH) from Pseudomonas aeruginosa (strain ATCC 15692 / DSM 22644 / CIP 104116 / JCM 14847 / LMG 12228 / 1C / PRS 101 / PAO1).